Here is a 350-residue protein sequence, read N- to C-terminus: Twinfilin-1 (350 aa).

Residue Ser2 is modified to N-acetylserine. Residues 2–139 (SHQTGIQASE…SLHGYRKYLL (138 aa)) enclose the ADF-H 1 domain. Phosphoserine is present on residues Ser143 and Ser277. In terms of domain architecture, ADF-H 2 spans 175–313 (LQGVAFPISR…TADFLYDEVH (139 aa)). Tyr309 is subject to Phosphotyrosine. A disordered region spans residues 316–350 (QHAHKQSFAKPKGPAGKRGIRRLIRGPAEAEATTD). Thr349 carries the post-translational modification Phosphothreonine.

This sequence belongs to the actin-binding proteins ADF family. Twinfilin subfamily. In terms of assembly, interacts with G-actin; ADP-actin form and capping protein (CP). May also be able to interact with TWF2 and phosphoinositides, PI(4,5)P2. When bound to PI(4,5)P2, it is down-regulated. Interacts with ACTG1. Post-translationally, phosphorylated on serine and threonine residues.

It is found in the cytoplasm. It localises to the cytoskeleton. Its function is as follows. Actin-binding protein involved in motile and morphological processes. Inhibits actin polymerization, likely by sequestering G-actin. By capping the barbed ends of filaments, it also regulates motility. Seems to play an important role in clathrin-mediated endocytosis and distribution of endocytic organelles. The protein is Twinfilin-1 (Twf1) of Rattus norvegicus (Rat).